The sequence spans 258 residues: Acyl-[acyl-carrier-protein]--UDP-N-acetylglucosamine O-acyltransferase (258 aa).

This sequence belongs to the transferase hexapeptide repeat family. LpxA subfamily. Homotrimer.

The protein resides in the cytoplasm. It catalyses the reaction a (3R)-hydroxyacyl-[ACP] + UDP-N-acetyl-alpha-D-glucosamine = a UDP-3-O-[(3R)-3-hydroxyacyl]-N-acetyl-alpha-D-glucosamine + holo-[ACP]. Its pathway is glycolipid biosynthesis; lipid IV(A) biosynthesis; lipid IV(A) from (3R)-3-hydroxytetradecanoyl-[acyl-carrier-protein] and UDP-N-acetyl-alpha-D-glucosamine: step 1/6. Its function is as follows. Involved in the biosynthesis of lipid A, a phosphorylated glycolipid that anchors the lipopolysaccharide to the outer membrane of the cell. The polypeptide is Acyl-[acyl-carrier-protein]--UDP-N-acetylglucosamine O-acyltransferase (Myxococcus xanthus (strain DK1622)).